The primary structure comprises 117 residues: Immunoglobulin lambda variable 6-57 (117 aa).

An N-terminal signal peptide occupies residues 1-19 (MAWAPLLLTLLAHCTGSWA). Residues 20 to 44 (NFMLTQPHSVSESPGKTVTISCTGS) form a framework-1 region. In terms of domain architecture, Ig-like spans 20–117 (NFMLTQPHSV…YYCQSYDSSN (98 aa)). Cys41 and Cys110 form a disulfide bridge. The tract at residues 45 to 52 (SGSIASNY) is complementarity-determining-1. The segment at 53–69 (VQWYQQRPGSAPTTVIY) is framework-2. Residues 65–97 (TTVIYEDNQRPSGVPDRFSGSIDSSSNSASLTI) are disordered. Residues 70-72 (EDN) are complementarity-determining-2. Positions 73 to 110 (QRPSGVPDRFSGSIDSSSNSASLTISGLKTEDEADYYC) are framework-3. A compositionally biased stretch (low complexity) spans 83–97 (SGSIDSSSNSASLTI). The interval 111-117 (QSYDSSN) is complementarity-determining-3.

Immunoglobulins are composed of two identical heavy chains and two identical light chains; disulfide-linked.

The protein localises to the secreted. It is found in the cell membrane. Functionally, v region of the variable domain of immunoglobulin light chains that participates in the antigen recognition. Immunoglobulins, also known as antibodies, are membrane-bound or secreted glycoproteins produced by B lymphocytes. In the recognition phase of humoral immunity, the membrane-bound immunoglobulins serve as receptors which, upon binding of a specific antigen, trigger the clonal expansion and differentiation of B lymphocytes into immunoglobulins-secreting plasma cells. Secreted immunoglobulins mediate the effector phase of humoral immunity, which results in the elimination of bound antigens. The antigen binding site is formed by the variable domain of one heavy chain, together with that of its associated light chain. Thus, each immunoglobulin has two antigen binding sites with remarkable affinity for a particular antigen. The variable domains are assembled by a process called V-(D)-J rearrangement and can then be subjected to somatic hypermutations which, after exposure to antigen and selection, allow affinity maturation for a particular antigen. This chain is Immunoglobulin lambda variable 6-57, found in Homo sapiens (Human).